The primary structure comprises 231 residues: MKRAVVVFSGGQDSTTCLVQALQQYDEVHCVTFDYGQRHRAEIDVARELALKLGARAHKVLDVTLLNELAVSSLTRDSIPVPDYEPEADGIPNTFVPGRNILFLTLAAIYAYQVKAEAVITGVCETDFSGYPDCRDEFVKALNHAVSLGMAKDIRFETPLMWIDKAETWALADYYGKLDLVRNETLTCYNGIKGDGCGHCAACNLRANGLNHYLADKPTVMAAMKQKTGLR.

Phenylalanine 8–leucine 18 serves as a coordination point for ATP. 4 residues coordinate Zn(2+): cysteine 188, cysteine 197, cysteine 200, and cysteine 203.

It belongs to the QueC family. The cofactor is Zn(2+).

The enzyme catalyses 7-carboxy-7-deazaguanine + NH4(+) + ATP = 7-cyano-7-deazaguanine + ADP + phosphate + H2O + H(+). It participates in purine metabolism; 7-cyano-7-deazaguanine biosynthesis. In terms of biological role, catalyzes the ATP-dependent conversion of 7-carboxy-7-deazaguanine (CDG) to 7-cyano-7-deazaguanine (preQ(0)). In Escherichia coli (strain SE11), this protein is 7-cyano-7-deazaguanine synthase.